The sequence spans 294 residues: Elongation factor Ts (294 aa).

The interval 82–85 is involved in Mg(2+) ion dislocation from EF-Tu; that stretch reads TDFV.

It belongs to the EF-Ts family.

It localises to the cytoplasm. Functionally, associates with the EF-Tu.GDP complex and induces the exchange of GDP to GTP. It remains bound to the aminoacyl-tRNA.EF-Tu.GTP complex up to the GTP hydrolysis stage on the ribosome. The polypeptide is Elongation factor Ts (Psychrobacter arcticus (strain DSM 17307 / VKM B-2377 / 273-4)).